The primary structure comprises 958 residues: MNIKLRFPRSSLAIAILSVVAFLVLIALTAFFLVHFYSEYLWYDQLGFTGVIVTQWAAIFVVFCLAFVFVSIFLWLCMFSAHKFRPRYTSLSSVLSHYQKVIDPIRKIVVLLVSLGLGAVAGIFAASRWDIVLAWLNKVPTGKSDPIFHNDISFYFFDLPFYRRLLFFLLVTFVLGGILSILISVVYGALRVDGKEIWLSKGARVQYAVLAAGIFVLLGLEFWLNRFDTLLSDRSGLITGAAYVEVNALIPGFAVLALVALGVALLFCITAFTSRWRLPIIGVALAVVSALVVITALPWGVQRFHVDPNARVLESEYIKRNIESTRFAYGIDKTHEVLYSAKTDVKPGQLRNDARTTASIRILDPGLVSRAFGQLQQFRQYYTFGDDLSVDRYHLGGETRDAVVALRELSLSGLGSGNTWVNQALVYTHGYGLVAAYGNDRTPDGEPKFFESGIPTTGLLGKYEPRIYFGRKSPPYSIVGAPSGAAPFEFDYPSSSGGESYTTFKGSGGPKLDSFLKRLIYAMKFGSEQILLSSQVGDYSQILYDRDPIKRVGKVAPWLRLDRNPYPSVVDGRIVWIVDGYTTSDQFPYSDLNSFTTLSQDSQSLPALVNGSDSINYIRNSVKATVDAYSGQVKLYAWDPNDPILKVWEKVFPGTLHPIKEISGDLMSHVRYPLELFNIQRQILARYHVTDPGVFFSHEDAWGIPIDPQKSEPVMQSTGQRRSRTVFSVAQPPYYLTMRMPGQNLAAYSIYSVFIPKSTGENSRSVLTGYLSANSDAGNIPGQISPDYGKLTLLRLSKDQTVPGPGQIQNAFDSDPKVGNQLNILRQGGQTRVLPGNLLTLPVGGGFLYVQPVYVQSTGSTSYTLLQKVLAAFGNKIAFESTLNQALDSLFAGNSGASNSGTSDISIHPPPHSDLIAQIKAALREKVDALTNKDLVKYAQADSKLNELLSRYLDANRG.

7 helical membrane passes run 14 to 34 (IAIL…FFLV), 59 to 79 (IFVV…LCMF), 107 to 127 (KIVV…FAAS), 166 to 186 (LFFL…ISVV), 205 to 225 (VQYA…FWLN), 249 to 269 (LIPG…LFCI), and 280 to 300 (IIGV…LPWG).

The protein belongs to the UPF0182 family.

The protein resides in the cell membrane. In Tropheryma whipplei (strain TW08/27) (Whipple's bacillus), this protein is UPF0182 protein TW644.